Reading from the N-terminus, the 150-residue chain is Large ribosomal subunit protein bL9 (150 aa).

It belongs to the bacterial ribosomal protein bL9 family.

Binds to the 23S rRNA. This Renibacterium salmoninarum (strain ATCC 33209 / DSM 20767 / JCM 11484 / NBRC 15589 / NCIMB 2235) protein is Large ribosomal subunit protein bL9.